The sequence spans 61 residues: Large ribosomal subunit protein bL32c (61 aa).

Residues 37-61 (SRSFSSGNEHPKPKGFSGQQQQTNK) form a disordered region.

The protein belongs to the bacterial ribosomal protein bL32 family.

The protein localises to the plastid. It localises to the chloroplast. In Agrostis stolonifera (Creeping bentgrass), this protein is Large ribosomal subunit protein bL32c.